The sequence spans 538 residues: Putative cysteine ligase BshC (538 aa).

Residues 460–484 (KINEQIELLERMLKRNVEKKHEVEL) are a coiled coil.

It belongs to the BshC family.

Its function is as follows. Involved in bacillithiol (BSH) biosynthesis. May catalyze the last step of the pathway, the addition of cysteine to glucosamine malate (GlcN-Mal) to generate BSH. This chain is Putative cysteine ligase BshC, found in Bacillus cereus (strain ATCC 10987 / NRS 248).